Here is a 512-residue protein sequence, read N- to C-terminus: Calcium-dependent protein kinase 18 (512 aa).

Residues 1-25 (MGLCSSSSARRDAGTPGGGNGAGNK) form a disordered region. Glycine 2 carries N-myristoyl glycine lipidation. The 261-residue stretch at 52-312 (YALGKLLGHG…AAQALSHEWV (261 aa)) folds into the Protein kinase domain. ATP-binding positions include 58–66 (LGHGQFGYT) and lysine 81. Residue aspartate 178 is the Proton acceptor of the active site. The autoinhibitory domain stretch occupies residues 318–348 (ASDIPLDISVLHNMRQFVKYSRFKQFALRAL). EF-hand domains lie at 355–390 (EELS…DVPW), 392–427 (LKGP…VHQL), 434–469 (KWKS…KGSI), and 472–499 (LLEE…ASMS). Residues aspartate 368, aspartate 370, asparagine 372, threonine 374, glutamate 379, aspartate 405, asparagine 407, aspartate 409, glutamate 416, aspartate 447, aspartate 449, aspartate 451, tyrosine 453, glutamate 458, aspartate 477, aspartate 479, aspartate 481, lysine 483, and glutamate 488 each contribute to the Ca(2+) site.

The protein belongs to the protein kinase superfamily. Ser/Thr protein kinase family. CDPK subfamily. In terms of assembly, interacts with MPK5. Autophosphorylated. Phosphorylated by MPK5.

Its subcellular location is the cell membrane. It carries out the reaction L-seryl-[protein] + ATP = O-phospho-L-seryl-[protein] + ADP + H(+). The enzyme catalyses L-threonyl-[protein] + ATP = O-phospho-L-threonyl-[protein] + ADP + H(+). Activated by calcium. Autophosphorylation may play an important role in the regulation of the kinase activity. In terms of biological role, may play a role in signal transduction pathways that involve calcium as a second messenger. Functions upstream of MPK5 in a signaling pathway that represses defense gene expression and negatively regulates resistance to rice blast fungus. Phosphorylates MPK5 at Thr-14 and Thr-32 and activates MPK5 independently of MAP kinase kinase (MKK) phosphorylation. May be involved in arbuscular mycorrhizal presymbiotic phase signaling. Phosphorylates the elicitor-responsive protein ERG1 in vitro. Phosphorylation is calcium-dependent. The protein is Calcium-dependent protein kinase 18 of Oryza sativa subsp. japonica (Rice).